Reading from the N-terminus, the 140-residue chain is uncharacterized protein (140 aa).

3 helical membrane passes run 20 to 42 (ILYY…YVSG), 88 to 110 (FVAL…PVLL), and 115 to 137 (IIYT…GLLQ).

It localises to the cell membrane. This is an uncharacterized protein from Archaeoglobus fulgidus (strain ATCC 49558 / DSM 4304 / JCM 9628 / NBRC 100126 / VC-16).